The primary structure comprises 128 residues: Small ribosomal subunit protein uS12 (128 aa).

Position 89 is a 3-methylthioaspartic acid (aspartate 89). The disordered stretch occupies residues serine 101–lysine 128. Residues glycine 113 to lysine 128 show a composition bias toward basic residues.

It belongs to the universal ribosomal protein uS12 family. As to quaternary structure, part of the 30S ribosomal subunit. Contacts proteins S8 and S17. May interact with IF1 in the 30S initiation complex.

With S4 and S5 plays an important role in translational accuracy. Its function is as follows. Interacts with and stabilizes bases of the 16S rRNA that are involved in tRNA selection in the A site and with the mRNA backbone. Located at the interface of the 30S and 50S subunits, it traverses the body of the 30S subunit contacting proteins on the other side and probably holding the rRNA structure together. The combined cluster of proteins S8, S12 and S17 appears to hold together the shoulder and platform of the 30S subunit. This chain is Small ribosomal subunit protein uS12, found in Prosthecochloris aestuarii (strain DSM 271 / SK 413).